The chain runs to 988 residues: Squamosa promoter-binding-like protein 16 (988 aa).

Residues 52–79 form a disordered region; it reads GTPVDLTRPSKKVRSGSPGSGGGGGGNY. A compositionally biased stretch (gly residues) spans 69–78; it reads PGSGGGGGGN. The SBP-type zinc finger occupies 79–156; it reads YPKCQVDNCK…DGHNRRRRKT (78 aa). Cys82, Cys87, Cys104, His107, Cys123, Cys126, His130, and Cys142 together coordinate Zn(2+). The Bipartite nuclear localization signal signature appears at 139-155; the sequence is KRSCRRRLDGHNRRRRK. Disordered stretches follow at residues 240-262 and 289-416; these read RKNP…SSPS and GFGN…DTST. Polar residues-rich tracts occupy residues 250–262, 301–311, and 327–358; these read NPQN…SSPS, LTSSDHSATTS, and RTSS…FTSS. Low complexity predominate over residues 368–379; the sequence is ASSTKYYSSASS.

The cofactor is Zn(2+).

It localises to the nucleus. Its function is as follows. Trans-acting factor that binds specifically to the consensus nucleotide sequence 5'-TNCGTACAA-3'. The sequence is that of Squamosa promoter-binding-like protein 16 (SPL16) from Arabidopsis thaliana (Mouse-ear cress).